The sequence spans 96 residues: Small ribosomal subunit protein bS20 (96 aa).

The tract at residues 1–27 is disordered; sequence MAKQEVAAKKVKRPTALKRDLQNKKKR.

The protein belongs to the bacterial ribosomal protein bS20 family.

Functionally, binds directly to 16S ribosomal RNA. This Protochlamydia amoebophila (strain UWE25) protein is Small ribosomal subunit protein bS20.